The sequence spans 1657 residues: Alsin (1657 aa).

RCC1 repeat units follow at residues 59 to 108 (DGEV…AVTD), 109 to 167 (NGVA…ALSI), and 169 to 218 (REIW…ALVQ). The tract at residues 432 to 480 (TGAQAGSSAIGPEGLKDSREEQVKQESMQGKKSSSLVDIREEETEGGSR) is disordered. A compositionally biased stretch (basic and acidic residues) spans 445–455 (GLKDSREEQVK). Over residues 456-467 (QESMQGKKSSSL) the composition is skewed to polar residues. Phosphoserine occurs at positions 465, 466, 483, and 492. Threonine 510 is modified (phosphothreonine). 2 RCC1 repeats span residues 525 to 576 (RTEV…ALTA) and 578 to 627 (SQVY…FLVD). Lysine 533 carries the post-translational modification N6-acetyllysine. Residues 690–885 (GYIASLHELA…ECLALHLGRK (196 aa)) enclose the DH domain. The PH domain maps to 901–1007 (GKMTDSLRKP…RAISQAVDQA (107 aa)). MORN repeat units lie at residues 1049 to 1071 (YDGR…DGKM), 1072 to 1094 (YSGM…NKAM), 1100 to 1122 (YVGH…SGEV), 1123 to 1145 (FEGC…KLTS), 1151 to 1173 (FIGQ…TRGE), 1175 to 1197 (YMGM…FGLY), 1198 to 1220 (YEGN…DDTI), and 1221 to 1244 (YEGE…NGDY). A Phosphoserine modification is found at serine 1335. The 145-residue stretch at 1513–1657 (KQPDIALLGF…YYQIQREKLN (145 aa)) folds into the VPS9 domain.

Forms a heteromeric complex with ALS2CL. Interacts with ALS2CL.

In terms of biological role, may act as a GTPase regulator. Controls survival and growth of spinal motoneurons. This Homo sapiens (Human) protein is Alsin (ALS2).